Here is a 396-residue protein sequence, read N- to C-terminus: Acetate kinase (396 aa).

A Mg(2+)-binding site is contributed by asparagine 7. Lysine 14 serves as a coordination point for ATP. Arginine 86 serves as a coordination point for substrate. Residue aspartate 143 is the Proton donor/acceptor of the active site. Residues 203 to 207 (HLGNG), 277 to 279 (DMR), and 325 to 329 (GIGEH) contribute to the ATP site. Residue glutamate 380 participates in Mg(2+) binding.

The protein belongs to the acetokinase family. In terms of assembly, homodimer. Mg(2+) is required as a cofactor. The cofactor is Mn(2+).

It is found in the cytoplasm. The enzyme catalyses acetate + ATP = acetyl phosphate + ADP. It functions in the pathway metabolic intermediate biosynthesis; acetyl-CoA biosynthesis; acetyl-CoA from acetate: step 1/2. Its function is as follows. Catalyzes the formation of acetyl phosphate from acetate and ATP. Can also catalyze the reverse reaction. The chain is Acetate kinase from Sulfurovum sp. (strain NBC37-1).